A 180-amino-acid polypeptide reads, in one-letter code: UPF0149 protein XAC3406 (180 aa).

This sequence belongs to the UPF0149 family.

The chain is UPF0149 protein XAC3406 from Xanthomonas axonopodis pv. citri (strain 306).